We begin with the raw amino-acid sequence, 88 residues long: MVKLRLKRCGRKQRAVYRIVAIDVRSRREGRDLRKVGFYDPINNQTYLNVPAILYFLEKGAQPTATVHDILKKAGVFTELTLNQTKFT.

The protein belongs to the bacterial ribosomal protein bS16 family.

Its subcellular location is the plastid. It localises to the chloroplast. The protein is Small ribosomal subunit protein bS16c of Gossypium hirsutum (Upland cotton).